The primary structure comprises 353 residues: Photosystem II protein D1 (353 aa).

Thr-2 is subject to N-acetylthreonine. Phosphothreonine is present on Thr-2. Transmembrane regions (helical) follow at residues 29–46 (YIGWFGVLMIPTLLTATS), 118–133 (HFLLGVACYMGREWEL), and 142–156 (WIAVAYSAPVAAATA). A chlorophyll a-binding site is contributed by His-118. Tyr-126 is a pheophytin a binding site. Residues Asp-170 and Glu-189 each coordinate [CaMn4O5] cluster. Residues 197–218 (FHMLGVAGVFGGSLFSAMHGSL) traverse the membrane as a helical segment. His-198 lines the chlorophyll a pocket. A quinone is bound by residues His-215 and 264–265 (SF). His-215 serves as a coordination point for Fe cation. His-272 is a binding site for Fe cation. The chain crosses the membrane as a helical span at residues 274 to 288 (FLAAWPVVGIWFTAL). [CaMn4O5] cluster contacts are provided by His-332, Glu-333, Asp-342, and Ala-344. A propeptide spanning residues 345–353 (VVEAPSTNG) is cleaved from the precursor.

Belongs to the reaction center PufL/M/PsbA/D family. As to quaternary structure, PSII is composed of 1 copy each of membrane proteins PsbA, PsbB, PsbC, PsbD, PsbE, PsbF, PsbH, PsbI, PsbJ, PsbK, PsbL, PsbM, PsbT, PsbX, PsbY, PsbZ, Psb30/Ycf12, at least 3 peripheral proteins of the oxygen-evolving complex and a large number of cofactors. It forms dimeric complexes. It depends on The D1/D2 heterodimer binds P680, chlorophylls that are the primary electron donor of PSII, and subsequent electron acceptors. It shares a non-heme iron and each subunit binds pheophytin, quinone, additional chlorophylls, carotenoids and lipids. D1 provides most of the ligands for the Mn4-Ca-O5 cluster of the oxygen-evolving complex (OEC). There is also a Cl(-1) ion associated with D1 and D2, which is required for oxygen evolution. The PSII complex binds additional chlorophylls, carotenoids and specific lipids. as a cofactor. Tyr-161 forms a radical intermediate that is referred to as redox-active TyrZ, YZ or Y-Z. In terms of processing, C-terminally processed by CTPA; processing is essential to allow assembly of the oxygen-evolving complex and thus photosynthetic growth.

The protein resides in the plastid. Its subcellular location is the chloroplast thylakoid membrane. It carries out the reaction 2 a plastoquinone + 4 hnu + 2 H2O = 2 a plastoquinol + O2. In terms of biological role, photosystem II (PSII) is a light-driven water:plastoquinone oxidoreductase that uses light energy to abstract electrons from H(2)O, generating O(2) and a proton gradient subsequently used for ATP formation. It consists of a core antenna complex that captures photons, and an electron transfer chain that converts photonic excitation into a charge separation. The D1/D2 (PsbA/PsbD) reaction center heterodimer binds P680, the primary electron donor of PSII as well as several subsequent electron acceptors. The sequence is that of Photosystem II protein D1 from Aethionema grandiflorum (Persian stone-cress).